The following is a 578-amino-acid chain: Triokinase/FMN cyclase (578 aa).

Residues 9–336 enclose the DhaK domain; that stretch reads SVEGCAGDAL…IDAETNAKAW (328 aa). Residues 56–59, Lys109, and Asp114 contribute to the dihydroxyacetone site; that span reads GSGH. The active-site Tele-hemiaminal-histidine intermediate is the His221. Residues 372–571 form the DhaL domain; it reads KQMTLVLDRI…AAAIFRAILE (200 aa). ATP-binding positions include 401–404, 446–447, Gly486, and 494–495; these read DGDC, SS, and TM. Residues Ser511 and Ser545 each carry the phosphoserine modification. 556 to 558 provides a ligand contact to ATP; sequence DPG.

The protein belongs to the dihydroxyacetone kinase (DAK) family. In terms of assembly, homodimer. Interacts with IFIH1 (via the CARD domains), the interaction is inhibited by viral infection. It depends on Mg(2+) as a cofactor. Mn(2+) serves as cofactor. The cofactor is Co(2+).

The enzyme catalyses dihydroxyacetone + ATP = dihydroxyacetone phosphate + ADP + H(+). It catalyses the reaction D-glyceraldehyde + ATP = D-glyceraldehyde 3-phosphate + ADP + H(+). The catalysed reaction is FAD = riboflavin cyclic-4',5'-phosphate + AMP + H(+). Its activity is regulated as follows. Each activity is inhibited by the substrate(s) of the other. Functionally, catalyzes both the phosphorylation of dihydroxyacetone and of glyceraldehyde, and the splitting of ribonucleoside diphosphate-X compounds among which FAD is the best substrate. Represses IFIH1-mediated cellular antiviral response. The sequence is that of Triokinase/FMN cyclase (Tkfc) from Rattus norvegicus (Rat).